A 623-amino-acid polypeptide reads, in one-letter code: Probable methyltransferase PMT8 (623 aa).

The Cytoplasmic segment spans residues 1–13 (MMRGRSDGGLKKR). A helical; Signal-anchor for type II membrane protein membrane pass occupies residues 14–34 (LIASVCVVALFVCFLFMYYGS). Topologically, residues 35–623 (SSQGASALEY…LTSESLRDSE (589 aa)) are lumenal. N-linked (GlcNAc...) asparagine glycosylation is found at Asn-204, Asn-350, and Asn-588.

The protein belongs to the methyltransferase superfamily.

The protein resides in the golgi apparatus membrane. In Arabidopsis thaliana (Mouse-ear cress), this protein is Probable methyltransferase PMT8.